A 287-amino-acid chain; its full sequence is Bifunctional protein FolD (287 aa).

NADP(+)-binding positions include 171 to 173 (GHS), Ile196, and Ile237.

It belongs to the tetrahydrofolate dehydrogenase/cyclohydrolase family. As to quaternary structure, homodimer.

The catalysed reaction is (6R)-5,10-methylene-5,6,7,8-tetrahydrofolate + NADP(+) = (6R)-5,10-methenyltetrahydrofolate + NADPH. The enzyme catalyses (6R)-5,10-methenyltetrahydrofolate + H2O = (6R)-10-formyltetrahydrofolate + H(+). The protein operates within one-carbon metabolism; tetrahydrofolate interconversion. Catalyzes the oxidation of 5,10-methylenetetrahydrofolate to 5,10-methenyltetrahydrofolate and then the hydrolysis of 5,10-methenyltetrahydrofolate to 10-formyltetrahydrofolate. This is Bifunctional protein FolD from Methanosarcina mazei (strain ATCC BAA-159 / DSM 3647 / Goe1 / Go1 / JCM 11833 / OCM 88) (Methanosarcina frisia).